The sequence spans 199 residues: MAPKVAIIIYSLYHHIAQLAEEEKKGIEAAGGVADIYQVPETLSDDVLKLLHAPAKPNYPIATNDTLTGYDAYLFGIPTRFGNYPAQFKAFWDATGGLWAQGALAGKQAGIFVSTSGQGGGQETTAVNALSVLVHHGIIFVPLGYAKAFPLQTNLEEIHGGSPYGAGTFAGVDGSRQPTKLEKEIAFIQGKSFYETVSK.

The Flavodoxin-like domain occupies 5–193 (VAIIIYSLYH…EIAFIQGKSF (189 aa)). Residues 11 to 15 (SLYHH) and 111 to 165 (IFVS…SPYG) contribute to the FMN site.

Belongs to the WrbA family. FMN serves as cofactor.

It is found in the cell membrane. It catalyses the reaction a quinone + NADH + H(+) = a quinol + NAD(+). The enzyme catalyses a quinone + NADPH + H(+) = a quinol + NADP(+). Flavodoxin-like protein (FLP) that plays a role in cell wall integrity, oxidative stress protection and virulence. FLPs act as NAD(P)H quinone oxidoreductases. Reduces ubiquinone (coenzyme Q), enabling it to serve as an antioxidant in the membrane. The chain is NAD(P)H quinone oxidoreductase PST3 from Candida albicans (strain SC5314 / ATCC MYA-2876) (Yeast).